Reading from the N-terminus, the 309-residue chain is tRNA dimethylallyltransferase (309 aa).

9–16 (GPTAIGKT) serves as a coordination point for ATP. Position 11 to 16 (11 to 16 (TAIGKT)) interacts with substrate. 2 interaction with substrate tRNA regions span residues 34–37 (DSRQ) and 164–168 (QRMMR).

It belongs to the IPP transferase family. In terms of assembly, monomer. Mg(2+) serves as cofactor.

It carries out the reaction adenosine(37) in tRNA + dimethylallyl diphosphate = N(6)-dimethylallyladenosine(37) in tRNA + diphosphate. Catalyzes the transfer of a dimethylallyl group onto the adenine at position 37 in tRNAs that read codons beginning with uridine, leading to the formation of N6-(dimethylallyl)adenosine (i(6)A). The chain is tRNA dimethylallyltransferase from Flavobacterium johnsoniae (strain ATCC 17061 / DSM 2064 / JCM 8514 / BCRC 14874 / CCUG 350202 / NBRC 14942 / NCIMB 11054 / UW101) (Cytophaga johnsonae).